We begin with the raw amino-acid sequence, 725 residues long: Fatty acid oxidation complex subunit alpha (725 aa).

The interval Met1–Lys189 is enoyl-CoA hydratase/isomerase. Position 296 (Asp296) interacts with substrate. Residues Glu311–Leu725 are 3-hydroxyacyl-CoA dehydrogenase. NAD(+)-binding positions include Met324, Asp343, Val400–Glu402, Lys407, and Ser429. His450 functions as the For 3-hydroxyacyl-CoA dehydrogenase activity in the catalytic mechanism. Residue Asn453 participates in NAD(+) binding. Residues Asn500 and Tyr660 each coordinate substrate.

It in the N-terminal section; belongs to the enoyl-CoA hydratase/isomerase family. This sequence in the C-terminal section; belongs to the 3-hydroxyacyl-CoA dehydrogenase family. As to quaternary structure, heterotetramer of two alpha chains (FadB) and two beta chains (FadA).

The catalysed reaction is a (3S)-3-hydroxyacyl-CoA + NAD(+) = a 3-oxoacyl-CoA + NADH + H(+). It catalyses the reaction a (3S)-3-hydroxyacyl-CoA = a (2E)-enoyl-CoA + H2O. It carries out the reaction a 4-saturated-(3S)-3-hydroxyacyl-CoA = a (3E)-enoyl-CoA + H2O. The enzyme catalyses (3S)-3-hydroxybutanoyl-CoA = (3R)-3-hydroxybutanoyl-CoA. The catalysed reaction is a (3Z)-enoyl-CoA = a 4-saturated (2E)-enoyl-CoA. It catalyses the reaction a (3E)-enoyl-CoA = a 4-saturated (2E)-enoyl-CoA. Its pathway is lipid metabolism; fatty acid beta-oxidation. Its function is as follows. Involved in the aerobic and anaerobic degradation of long-chain fatty acids via beta-oxidation cycle. Catalyzes the formation of 3-oxoacyl-CoA from enoyl-CoA via L-3-hydroxyacyl-CoA. It can also use D-3-hydroxyacyl-CoA and cis-3-enoyl-CoA as substrate. This chain is Fatty acid oxidation complex subunit alpha, found in Salmonella paratyphi A (strain ATCC 9150 / SARB42).